The sequence spans 1396 residues: Melanoma inhibitory activity protein 2 (1396 aa).

A signal peptide spans 1-22 (MAEVSVQRILLLVVSLAKCLEG). Residues 23–604 (TKLLAHLKKC…YGFMSSALSP (582 aa)) lie on the Lumenal side of the membrane. The SH3 domain maps to 39–101 (TLISRVLALR…PRDAVEIEEV (63 aa)). N59 carries an N-linked (GlcNAc...) asparagine glycan. Disordered regions lie at residues 197-288 (EGAG…VPDE) and 331-361 (ESNP…TDKE). The segment covering 243–258 (SDTEPTQELALEEESD) has biased composition (acidic residues). N-linked (GlcNAc...) asparagine glycosylation occurs at N366. 2 disordered regions span residues 396-421 (DKGE…PEKE) and 525-557 (PMEE…ELSV). The stretch at 605-625 (IEILLESVVAALPEDMRADFN) is an intramembrane region. The Lumenal portion of the chain corresponds to 626–628 (PSG). A helical membrane pass occupies residues 629-649 (FSLELAVCVLSVGLLAVVLFL). Residues 650-1396 (WRGFRSIRSR…AADPPETQEA (747 aa)) are Cytoplasmic-facing. The segment at 651 to 1243 (RGFRSIRSRF…RSYNMPSLDK (593 aa)) is mediates interaction with MIA3. Coiled coils occupy residues 693 to 867 (YEGL…LVTS) and 914 to 1082 (AAKL…NRQK). The disordered stretch occupies residues 1103–1396 (PNTAFGREHS…AADPPETQEA (294 aa)). Residues 1105–1396 (TAFGREHSPY…AADPPETQEA (292 aa)) are proline-rich domain (PRD); probably mediates interaction with COPII coat subunits. The span at 1135-1146 (LLEGPLRLSPLL) shows a compositional bias: low complexity. Residues 1165 to 1179 (MNTERGESSYDRLSD) are compositionally biased toward basic and acidic residues. Residues 1252–1269 (MESSGNGTKDNLGNSNVP) are compositionally biased toward polar residues. 2 stretches are compositionally biased toward pro residues: residues 1331-1342 (RDFPGPPLPPFP) and 1351-1368 (GFPP…PPPH).

Belongs to the MIA/OTOR family. In terms of assembly, interacts with MIA3. Interacts with the COPII coat subunits SEC23A, SEC23B and maybe SEC24C. Interacts with PREB; recruits PREB to endoplasmic reticulum exit sites. Interacts with APOB. As to expression, isoform 1 is expressed in liver (at protein level). Isoform 2 is highly expressed in liver and weakly in testis.

The protein resides in the endoplasmic reticulum membrane. In terms of biological role, plays a role in the transport of cargos that are too large to fit into COPII-coated vesicles and require specific mechanisms to be incorporated into membrane-bound carriers and exported from the endoplasmic reticulum. Plays a role in the secretion of lipoproteins, pre-chylomicrons and pre-VLDLs, by participating in their export from the endoplasmic reticulum. Thereby, may play a role in cholesterol and triglyceride homeostasis. Required for collagen VII (COL7A1) secretion by loading COL7A1 into transport carriers and recruiting PREB/SEC12 at the endoplasmic reticulum exit sites. This chain is Melanoma inhibitory activity protein 2, found in Mus musculus (Mouse).